Reading from the N-terminus, the 336-residue chain is Methionine import ATP-binding protein MetN (336 aa).

The region spanning 2-254 is the ABC transporter domain; the sequence is IKIKNLKKYY…PNAKMKEFLG (253 aa). 34–41 is an ATP binding site; that stretch reads GHSGAGKS.

The protein belongs to the ABC transporter superfamily. Methionine importer (TC 3.A.1.24) family. As to quaternary structure, the complex is composed of two ATP-binding proteins (MetN), two transmembrane proteins (MetI) and a solute-binding protein (MetQ).

It is found in the cell inner membrane. The catalysed reaction is L-methionine(out) + ATP + H2O = L-methionine(in) + ADP + phosphate + H(+). It carries out the reaction D-methionine(out) + ATP + H2O = D-methionine(in) + ADP + phosphate + H(+). In terms of biological role, part of the ABC transporter complex MetNIQ involved in methionine import. Responsible for energy coupling to the transport system. The sequence is that of Methionine import ATP-binding protein MetN from Campylobacter jejuni subsp. jejuni serotype O:2 (strain ATCC 700819 / NCTC 11168).